The sequence spans 1207 residues: Protein STU1 (1207 aa).

Disordered stretches follow at residues 504-525 (EKTA…SQSS), 549-730 (EQRR…DEDL), 789-856 (AQSI…EGVQ), 869-928 (AVEH…LYSE), and 1086-1105 (SSTP…LPGA). The span at 576–594 (SASTKSLSARTASTASTAS) shows a compositional bias: low complexity. 3 stretches are compositionally biased toward polar residues: residues 605-624 (SGES…SLMS), 653-672 (GKTT…TTKK), and 684-710 (AQTQ…VQKT). 2 stretches are compositionally biased toward low complexity: residues 711 to 724 (ASAS…APSA) and 791 to 806 (SIHH…SHLS). A compositionally biased stretch (basic and acidic residues) spans 869–878 (AVEHEVEKPV). Polar residues-rich tracts occupy residues 895–905 (NESISSDTVMG) and 919–928 (TSTGSVLYSE).

It belongs to the CLASP family. Interacts with microtubules.

The protein localises to the cytoplasm. It is found in the cytoskeleton. The protein resides in the nucleus. Its subcellular location is the spindle. Functionally, microtubule binding protein that promotes the stabilization of dynamic microtubules. Required for mitotic spindle formation. The chain is Protein STU1 (STU1) from Phaeosphaeria nodorum (strain SN15 / ATCC MYA-4574 / FGSC 10173) (Glume blotch fungus).